A 434-amino-acid polypeptide reads, in one-letter code: Phosphomethylpyrimidine synthase (434 aa).

Substrate contacts are provided by residues Asn-74, Met-103, Tyr-132, His-171, 193–195 (SRG), 234–237 (DGIR), and Glu-273. His-277 provides a ligand contact to Zn(2+). Substrate is bound at residue Tyr-300. His-341 lines the Zn(2+) pocket. The [4Fe-4S] cluster site is built by Cys-417, Cys-420, and Cys-424.

Belongs to the ThiC family. In terms of assembly, homodimer. [4Fe-4S] cluster is required as a cofactor.

It carries out the reaction 5-amino-1-(5-phospho-beta-D-ribosyl)imidazole + S-adenosyl-L-methionine = 4-amino-2-methyl-5-(phosphooxymethyl)pyrimidine + CO + 5'-deoxyadenosine + formate + L-methionine + 3 H(+). It functions in the pathway cofactor biosynthesis; thiamine diphosphate biosynthesis. In terms of biological role, catalyzes the synthesis of the hydroxymethylpyrimidine phosphate (HMP-P) moiety of thiamine from aminoimidazole ribotide (AIR) in a radical S-adenosyl-L-methionine (SAM)-dependent reaction. This Desulfotalea psychrophila (strain LSv54 / DSM 12343) protein is Phosphomethylpyrimidine synthase.